Reading from the N-terminus, the 339-residue chain is MTVKTRSNIAKKIEKDGGPETQYLAVDPNEIIQLQEESKKIPYKMEIVWRNVALFAALHFAAAIGLYQLIFEAKWQTVIFTFLLYVFGGFGITAGAHRLWSHKSYKATTPMRIFLMILNNIALQNDVIEWARDHRCHHKWTDTDADPHNTTRGFFFAHMGWLLVRKHPQVKEQGAKLDMSDLLSDPVLVFQRKHYFPLVILCCFILPTIIPVYFWKETAFIAFYTAGTFRYCFTLHATWCINSAAHYFGWKPYDSSITPVENVFTTIAAVGEGGHNFHHTFPQDYRTSEYSLKYNWTRVLIDTAAALGLVYDRKTACDEIIGRQVSNHGCDIQRGKSIM.

The next 4 helical transmembrane spans lie at 52–72 (VALF…LIFE), 77–97 (TVIF…AGAH), 195–215 (YFPL…VYFW), and 219–241 (AFIA…TWCI).

It belongs to the fatty acid desaturase type 1 family. Expressed in the intestine in adult worms and in all four larval stages. Additional expression in the hypodermis in all life stages.

It is found in the membrane. It carries out the reaction octadecanoyl-CoA + 2 Fe(II)-[cytochrome b5] + O2 + 2 H(+) = (9Z)-octadecenoyl-CoA + 2 Fe(III)-[cytochrome b5] + 2 H2O. It catalyses the reaction hexadecanoyl-CoA + 2 Fe(II)-[cytochrome b5] + O2 + 2 H(+) = (9Z)-hexadecenoyl-CoA + 2 Fe(III)-[cytochrome b5] + 2 H2O. The enzyme catalyses heptadecanoyl-CoA + 2 Fe(II)-[cytochrome b5] + O2 + 2 H(+) = (9Z)-heptadecenoyl-CoA + 2 Fe(III)-[cytochrome b5] + 2 H2O. The catalysed reaction is (11E)-octadecenoyl-CoA + 2 Fe(II)-[cytochrome b5] + O2 + 2 H(+) = (9Z,11E)-octadecadienoyl-CoA + 2 Fe(III)-[cytochrome b5] + 2 H2O. Its pathway is lipid metabolism; monounsaturated fatty acid biosynthesis. It functions in the pathway lipid metabolism; fatty acid metabolism. Functionally, delta(9)-fatty acid desaturase that acts preferentially on stearoyl-CoA (octadecanoyl-CoA) producing the monounsaturated oleoyl-CoA ((9Z)-octadecenoyl-CoA), one of the most abundant monounsaturated fatty acid in Caenorhabditis elegans phospholipids and triacylglycerols. Also acts on palmitoyl-CoA (hexadecanoyl-CoA), heptadecanoyl-CoA and (11E)-octadecenoyl-CoA (trans-vaccenoyl-CoA), the monounsaturated fatty acids (MUFAs) produced are further used as substrates to synthesize polyunsaturated fatty acids (PUFAs) by several other desaturases and elongases. Unlike plants, Caenorhabditis elegans desaturases seem to use fatty acyl-CoAs as substrates. This Caenorhabditis elegans protein is Delta(9)-fatty-acid desaturase fat-6 (fat-6).